The primary structure comprises 156 residues: Endoribonuclease YbeY (156 aa).

Residues His117, His121, and His127 each contribute to the Zn(2+) site.

The protein belongs to the endoribonuclease YbeY family. Zn(2+) is required as a cofactor.

The protein resides in the cytoplasm. Its function is as follows. Single strand-specific metallo-endoribonuclease involved in late-stage 70S ribosome quality control and in maturation of the 3' terminus of the 16S rRNA. The chain is Endoribonuclease YbeY from Shewanella frigidimarina (strain NCIMB 400).